Reading from the N-terminus, the 221-residue chain is MALVVEDIVKNFGEGLSETKVLKGINFEVEQGEFVILNGASGSGKTTLLTILGGLLSQTSGTVLYNDAPLFDKQHRPSDLRLEDIGFIFQSSHLVPYLKVIEQLTLVGQEAGMTKQQSSTRAIQLLKNIGLEDRLNVYPHQLSGGEKQRVAIMRAFMNNPKIILADEPTASLDADRATKVVEMIRQQIKEQQMIGIMITHDRRLFEYADRVIELEDGKITD.

The 219-residue stretch at 3–221 folds into the ABC transporter domain; sequence LVVEDIVKNF…IELEDGKITD (219 aa). An ATP-binding site is contributed by 39 to 46; the sequence is GASGSGKT.

Belongs to the ABC transporter superfamily. HrtA family. The complex is composed of two ATP-binding proteins (HrtA), two transmembrane proteins (HrtB) and a solute-binding protein.

Its subcellular location is the cell membrane. In terms of biological role, part of the ABC transporter complex hrt involved in hemin import. Responsible for energy coupling to the transport system. The protein is Putative hemin import ATP-binding protein HrtA (hrtA) of Staphylococcus aureus (strain USA300).